A 139-amino-acid polypeptide reads, in one-letter code: Phosphoribosyl-AMP cyclohydrolase (139 aa).

Asp95 is a binding site for Mg(2+). Cys96 contacts Zn(2+). Mg(2+) is bound by residues Asp97 and Asp99. Cys114 and Cys121 together coordinate Zn(2+).

This sequence belongs to the PRA-CH family. As to quaternary structure, homodimer. Requires Mg(2+) as cofactor. Zn(2+) is required as a cofactor.

It localises to the cytoplasm. The catalysed reaction is 1-(5-phospho-beta-D-ribosyl)-5'-AMP + H2O = 1-(5-phospho-beta-D-ribosyl)-5-[(5-phospho-beta-D-ribosylamino)methylideneamino]imidazole-4-carboxamide. Its pathway is amino-acid biosynthesis; L-histidine biosynthesis; L-histidine from 5-phospho-alpha-D-ribose 1-diphosphate: step 3/9. Its function is as follows. Catalyzes the hydrolysis of the adenine ring of phosphoribosyl-AMP. In Chelativorans sp. (strain BNC1), this protein is Phosphoribosyl-AMP cyclohydrolase.